Consider the following 195-residue polypeptide: HTH-type transcriptional regulator BetI (195 aa).

Residues Glu8 to Leu68 enclose the HTH tetR-type domain. The H-T-H motif DNA-binding region spans Thr31 to Phe50.

The protein operates within amine and polyamine biosynthesis; betaine biosynthesis via choline pathway [regulation]. Functionally, repressor involved in the biosynthesis of the osmoprotectant glycine betaine. It represses transcription of the choline transporter BetT and the genes of BetAB involved in the synthesis of glycine betaine. The chain is HTH-type transcriptional regulator BetI from Paraburkholderia xenovorans (strain LB400).